The chain runs to 354 residues: NADH-quinone oxidoreductase subunit H (354 aa).

8 consecutive transmembrane segments (helical) span residues 22 to 42 (ILIR…YLIL), 91 to 111 (YLVA…VIPF), 124 to 144 (LLYV…AGWA), 162 to 182 (VSYE…SGSL), 203 to 223 (LLSW…ISGV), 250 to 270 (GMTF…ISTM), 291 to 311 (IPGF…FIWI), and 326 to 346 (LGWK…AIWI).

Belongs to the complex I subunit 1 family. In terms of assembly, NDH-1 is composed of 14 different subunits. Subunits NuoA, H, J, K, L, M, N constitute the membrane sector of the complex.

The protein localises to the cell inner membrane. It catalyses the reaction a quinone + NADH + 5 H(+)(in) = a quinol + NAD(+) + 4 H(+)(out). NDH-1 shuttles electrons from NADH, via FMN and iron-sulfur (Fe-S) centers, to quinones in the respiratory chain. The immediate electron acceptor for the enzyme in this species is believed to be ubiquinone. Couples the redox reaction to proton translocation (for every two electrons transferred, four hydrogen ions are translocated across the cytoplasmic membrane), and thus conserves the redox energy in a proton gradient. This subunit may bind ubiquinone. The chain is NADH-quinone oxidoreductase subunit H from Cupriavidus metallidurans (strain ATCC 43123 / DSM 2839 / NBRC 102507 / CH34) (Ralstonia metallidurans).